A 154-amino-acid polypeptide reads, in one-letter code: Protein FasC (154 aa).

It belongs to the periplasmic pilus chaperone family.

Functionally, could be required for the biogenesis of a putative fimbria. This is Protein FasC (fasC) from Escherichia coli.